The chain runs to 220 residues: GTP cyclohydrolase 1 (220 aa).

C109, H112, and C180 together coordinate Zn(2+).

The protein belongs to the GTP cyclohydrolase I family. Toroid-shaped homodecamer, composed of two pentamers of five dimers.

The enzyme catalyses GTP + H2O = 7,8-dihydroneopterin 3'-triphosphate + formate + H(+). Its pathway is cofactor biosynthesis; 7,8-dihydroneopterin triphosphate biosynthesis; 7,8-dihydroneopterin triphosphate from GTP: step 1/1. The protein is GTP cyclohydrolase 1 of Yersinia enterocolitica serotype O:8 / biotype 1B (strain NCTC 13174 / 8081).